The primary structure comprises 333 residues: Anthranilate phosphoribosyltransferase (333 aa).

Residues glycine 81, 84 to 85 (GD), threonine 89, 91 to 94 (NIST), 109 to 117 (KHGNRSVSS), and alanine 121 each bind 5-phospho-alpha-D-ribose 1-diphosphate. Glycine 81 contacts anthranilate. Serine 93 contacts Mg(2+). An anthranilate-binding site is contributed by asparagine 112. Anthranilate is bound at residue arginine 167. Residues aspartate 225 and glutamate 226 each contribute to the Mg(2+) site.

The protein belongs to the anthranilate phosphoribosyltransferase family. Homodimer. Mg(2+) serves as cofactor.

The enzyme catalyses N-(5-phospho-beta-D-ribosyl)anthranilate + diphosphate = 5-phospho-alpha-D-ribose 1-diphosphate + anthranilate. It functions in the pathway amino-acid biosynthesis; L-tryptophan biosynthesis; L-tryptophan from chorismate: step 2/5. Functionally, catalyzes the transfer of the phosphoribosyl group of 5-phosphorylribose-1-pyrophosphate (PRPP) to anthranilate to yield N-(5'-phosphoribosyl)-anthranilate (PRA). This is Anthranilate phosphoribosyltransferase from Actinobacillus succinogenes (strain ATCC 55618 / DSM 22257 / CCUG 43843 / 130Z).